A 167-amino-acid chain; its full sequence is Probable phospholipid hydroperoxide glutathione peroxidase (167 aa).

C41 is an active-site residue.

This sequence belongs to the glutathione peroxidase family.

The protein resides in the cytoplasm. The enzyme catalyses a hydroperoxy polyunsaturated fatty acid + 2 glutathione = a hydroxy polyunsaturated fatty acid + glutathione disulfide + H2O. In terms of biological role, protects cells and enzymes from oxidative damage, by catalyzing the reduction of hydrogen peroxide, lipid peroxides and organic hydroperoxide, by glutathione. The sequence is that of Probable phospholipid hydroperoxide glutathione peroxidase (CSA) from Citrus sinensis (Sweet orange).